The following is a 480-amino-acid chain: Glutamyl-tRNA(Gln) amidotransferase subunit A (480 aa).

Catalysis depends on charge relay system residues Lys-76 and Ser-151. The Acyl-ester intermediate role is filled by Ser-175.

This sequence belongs to the amidase family. GatA subfamily. Heterotrimer of A, B and C subunits.

It catalyses the reaction L-glutamyl-tRNA(Gln) + L-glutamine + ATP + H2O = L-glutaminyl-tRNA(Gln) + L-glutamate + ADP + phosphate + H(+). In terms of biological role, allows the formation of correctly charged Gln-tRNA(Gln) through the transamidation of misacylated Glu-tRNA(Gln) in organisms which lack glutaminyl-tRNA synthetase. The reaction takes place in the presence of glutamine and ATP through an activated gamma-phospho-Glu-tRNA(Gln). In Exiguobacterium sibiricum (strain DSM 17290 / CCUG 55495 / CIP 109462 / JCM 13490 / 255-15), this protein is Glutamyl-tRNA(Gln) amidotransferase subunit A.